Here is a 156-residue protein sequence, read N- to C-terminus: Small ribosomal subunit protein bS18c (156 aa).

The segment at 1 to 54 (MYTSKQPFLKSKQPFRKSKQPFRKSKQPFRKFKKPFRKSKQPFRRRPRIGPGDR) is disordered. The span at 13–48 (QPFRKSKQPFRKSKQPFRKFKKPFRKSKQPFRRRPR) shows a compositional bias: basic residues.

The protein belongs to the bacterial ribosomal protein bS18 family. Part of the 30S ribosomal subunit.

Its subcellular location is the plastid. It is found in the chloroplast. This is Small ribosomal subunit protein bS18c from Lolium perenne (Perennial ryegrass).